The following is a 320-amino-acid chain: o-succinylbenzoate synthase (320 aa).

Catalysis depends on lysine 133, which acts as the Proton donor. Mg(2+)-binding residues include aspartate 161, glutamate 190, and aspartate 213. Residue lysine 235 is the Proton acceptor of the active site.

It belongs to the mandelate racemase/muconate lactonizing enzyme family. MenC type 1 subfamily. It depends on a divalent metal cation as a cofactor.

It catalyses the reaction (1R,6R)-6-hydroxy-2-succinyl-cyclohexa-2,4-diene-1-carboxylate = 2-succinylbenzoate + H2O. The protein operates within quinol/quinone metabolism; 1,4-dihydroxy-2-naphthoate biosynthesis; 1,4-dihydroxy-2-naphthoate from chorismate: step 4/7. It functions in the pathway quinol/quinone metabolism; menaquinone biosynthesis. In terms of biological role, converts 2-succinyl-6-hydroxy-2,4-cyclohexadiene-1-carboxylate (SHCHC) to 2-succinylbenzoate (OSB). This chain is o-succinylbenzoate synthase, found in Escherichia coli O6:K15:H31 (strain 536 / UPEC).